The sequence spans 142 residues: DNA-directed RNA polymerase subunit omega (142 aa).

The segment at 104 to 142 (FNTDADVDQESTDIQDDEVENEMSNQDSEDIDDEVDNEE) is disordered. Positions 108–142 (ADVDQESTDIQDDEVENEMSNQDSEDIDDEVDNEE) are enriched in acidic residues.

The protein belongs to the RNA polymerase subunit omega family. In terms of assembly, the RNAP catalytic core consists of 2 alpha, 1 beta, 1 beta' and 1 omega subunit. When a sigma factor is associated with the core the holoenzyme is formed, which can initiate transcription.

The catalysed reaction is RNA(n) + a ribonucleoside 5'-triphosphate = RNA(n+1) + diphosphate. Functionally, promotes RNA polymerase assembly. Latches the N- and C-terminal regions of the beta' subunit thereby facilitating its interaction with the beta and alpha subunits. In Wolbachia sp. subsp. Brugia malayi (strain TRS), this protein is DNA-directed RNA polymerase subunit omega.